An 849-amino-acid polypeptide reads, in one-letter code: Coiled-coil domain-containing protein 87 (849 aa).

Positions 387–415 form a coiled coil; sequence RHPAAGHRLEELEKMLRNLQEEEASGQWD.

It belongs to the CCDC87 family.

Its function is as follows. Plays a role in spermatogenesis, where it is important for normal sperm head morphology. Also required for the acrosome reaction and thus normal male fertility. In Homo sapiens (Human), this protein is Coiled-coil domain-containing protein 87 (CCDC87).